Consider the following 307-residue polypeptide: UPF0282 protein PH1002 (307 aa).

The protein belongs to the UPF0282 family.

This is UPF0282 protein PH1002 from Pyrococcus horikoshii (strain ATCC 700860 / DSM 12428 / JCM 9974 / NBRC 100139 / OT-3).